Reading from the N-terminus, the 396-residue chain is NADH-ubiquinone oxidoreductase 49 kDa subunit (396 aa).

This sequence belongs to the complex I 49 kDa subunit family.

It is found in the mitochondrion. It catalyses the reaction a ubiquinone + NADH + 5 H(+)(in) = a ubiquinol + NAD(+) + 4 H(+)(out). Functionally, core subunit of the mitochondrial membrane respiratory chain NADH dehydrogenase (Complex I) that is believed to belong to the minimal assembly required for catalysis. Complex I functions in the transfer of electrons from NADH to the respiratory chain. The immediate electron acceptor for the enzyme is believed to be ubiquinone. Component of the iron-sulfur (IP) fragment of the enzyme. Component of the iron-sulfur (IP) fragment of the enzyme. The polypeptide is NADH-ubiquinone oxidoreductase 49 kDa subunit (NAD7) (Reclinomonas americana).